The chain runs to 334 residues: Chitin synthase export chaperone (334 aa).

7 consecutive transmembrane segments (helical) span residues 49–69, 85–105, 123–143, 159–179, 185–205, 220–240, and 244–264; these read IIFE…TVIM, ILSF…IDAG, GLSS…FQLY, LAAF…WAGL, VGLF…YVAM, LGDI…LYAF, and ICIA…CNLL.

The protein belongs to the CHS7 family.

It is found in the endoplasmic reticulum membrane. Functionally, chaperone required for the export of the chitin synthase chs3 from the endoplasmic reticulum. Plays a critical role in cell wall integrity and virulence. The protein is Chitin synthase export chaperone of Fusarium oxysporum f. sp. lycopersici (strain 4287 / CBS 123668 / FGSC 9935 / NRRL 34936) (Fusarium vascular wilt of tomato).